The following is a 727-amino-acid chain: Glycerol-3-phosphate dehydrogenase, mitochondrial (727 aa).

A mitochondrion-targeting transit peptide spans 1 to 42; the sequence is MAFQKAVKGTILVGGGALATVLGLSQFAHYRRKQMNLAYVKA. FAD is bound at residue 71–99; that stretch reads DILVIGGGATGSGCALDAVTRGLKTALVE. Y601 carries the post-translational modification Phosphotyrosine. EF-hand domains follow at residues 623 to 658 and 659 to 694; these read SDID…INVQ and MDEN…IQKG. The Ca(2+) site is built by D672, N674, N676, Q678, and E683.

Belongs to the FAD-dependent glycerol-3-phosphate dehydrogenase family. FAD is required as a cofactor.

The protein localises to the mitochondrion. It catalyses the reaction a quinone + sn-glycerol 3-phosphate = dihydroxyacetone phosphate + a quinol. It functions in the pathway polyol metabolism; glycerol degradation via glycerol kinase pathway; glycerone phosphate from sn-glycerol 3-phosphate (anaerobic route): step 1/1. Its activity is regulated as follows. Calcium-binding enhance the activity of the enzyme. Calcium-responsive mitochondrial glycerol-3-phosphate dehydrogenase which seems to be a key component of the pancreatic beta-cell glucose-sensing device. The protein is Glycerol-3-phosphate dehydrogenase, mitochondrial of Homo sapiens (Human).